The sequence spans 936 residues: ABC transporter A family member 5 (936 aa).

A run of 7 helical transmembrane segments spans residues 34–54 (LIVI…LFDT), 340–360 (ASLI…PVML), 393–413 (FLAI…AIGL), 422–442 (SIQF…AFLV), 454–474 (VAAY…FQFL), 484–501 (WIYI…RGLY), and 527–547 (AMEE…IAAY). The 238-residue stretch at 614-851 (IVCDNLKKVY…YGGSYVLTMT (238 aa)) folds into the ABC transporter domain. 652-659 (GPNGAGKT) is a binding site for ATP.

It belongs to the ABC transporter superfamily. ABCA family. CPR flippase (TC 3.A.1.211) subfamily.

The protein localises to the membrane. This chain is ABC transporter A family member 5 (ABCA5), found in Arabidopsis thaliana (Mouse-ear cress).